A 556-amino-acid chain; its full sequence is 2-succinyl-5-enolpyruvyl-6-hydroxy-3-cyclohexene-1-carboxylate synthase (556 aa).

The protein belongs to the TPP enzyme family. MenD subfamily. As to quaternary structure, homodimer. Mg(2+) is required as a cofactor. The cofactor is Mn(2+). It depends on thiamine diphosphate as a cofactor.

It catalyses the reaction isochorismate + 2-oxoglutarate + H(+) = 5-enolpyruvoyl-6-hydroxy-2-succinyl-cyclohex-3-ene-1-carboxylate + CO2. Its pathway is quinol/quinone metabolism; 1,4-dihydroxy-2-naphthoate biosynthesis; 1,4-dihydroxy-2-naphthoate from chorismate: step 2/7. It functions in the pathway quinol/quinone metabolism; menaquinone biosynthesis. Its function is as follows. Catalyzes the thiamine diphosphate-dependent decarboxylation of 2-oxoglutarate and the subsequent addition of the resulting succinic semialdehyde-thiamine pyrophosphate anion to isochorismate to yield 2-succinyl-5-enolpyruvyl-6-hydroxy-3-cyclohexene-1-carboxylate (SEPHCHC). This is 2-succinyl-5-enolpyruvyl-6-hydroxy-3-cyclohexene-1-carboxylate synthase from Salmonella arizonae (strain ATCC BAA-731 / CDC346-86 / RSK2980).